The chain runs to 120 residues: MFLLYEYDIFWAFLLISSVIPILAFLLSGILAPIRKDPEKLSSYESGIEPIGDAWLQFRIRYYMFALVFVVFDVETVFLYPWAMSFDVLGVSVFIEALIFVLILIVGLVYAWRKGALEWS.

Helical transmembrane passes span 9–29 (IFWAFLLISSVIPILAFLLSG), 64–84 (MFALVFVVFDVETVFLYPWAM), and 88–108 (VLGVSVFIEALIFVLILIVGL).

Belongs to the complex I subunit 3 family. As to quaternary structure, NDH is composed of at least 16 different subunits, 5 of which are encoded in the nucleus.

The protein resides in the plastid. It is found in the chloroplast thylakoid membrane. It catalyses the reaction a plastoquinone + NADH + (n+1) H(+)(in) = a plastoquinol + NAD(+) + n H(+)(out). The catalysed reaction is a plastoquinone + NADPH + (n+1) H(+)(in) = a plastoquinol + NADP(+) + n H(+)(out). NDH shuttles electrons from NAD(P)H:plastoquinone, via FMN and iron-sulfur (Fe-S) centers, to quinones in the photosynthetic chain and possibly in a chloroplast respiratory chain. The immediate electron acceptor for the enzyme in this species is believed to be plastoquinone. Couples the redox reaction to proton translocation, and thus conserves the redox energy in a proton gradient. The sequence is that of NAD(P)H-quinone oxidoreductase subunit 3, chloroplastic from Fagopyrum esculentum subsp. ancestrale (Wild buckwheat).